We begin with the raw amino-acid sequence, 157 residues long: 2-C-methyl-D-erythritol 2,4-cyclodiphosphate synthase (157 aa).

Residues Asp8 and His10 each coordinate a divalent metal cation. Residues 8–10 (DVH) and 34–35 (HS) each bind 4-CDP-2-C-methyl-D-erythritol 2-phosphate. Position 42 (His42) interacts with a divalent metal cation. Residues 56–58 (DLG), 61–65 (FPDTD), 132–135 (TTTE), Phe139, and Arg142 each bind 4-CDP-2-C-methyl-D-erythritol 2-phosphate.

It belongs to the IspF family. As to quaternary structure, homotrimer. A divalent metal cation is required as a cofactor.

It catalyses the reaction 4-CDP-2-C-methyl-D-erythritol 2-phosphate = 2-C-methyl-D-erythritol 2,4-cyclic diphosphate + CMP. Its pathway is isoprenoid biosynthesis; isopentenyl diphosphate biosynthesis via DXP pathway; isopentenyl diphosphate from 1-deoxy-D-xylulose 5-phosphate: step 4/6. Functionally, involved in the biosynthesis of isopentenyl diphosphate (IPP) and dimethylallyl diphosphate (DMAPP), two major building blocks of isoprenoid compounds. Catalyzes the conversion of 4-diphosphocytidyl-2-C-methyl-D-erythritol 2-phosphate (CDP-ME2P) to 2-C-methyl-D-erythritol 2,4-cyclodiphosphate (ME-CPP) with a corresponding release of cytidine 5-monophosphate (CMP). The chain is 2-C-methyl-D-erythritol 2,4-cyclodiphosphate synthase from Salinibacter ruber (strain DSM 13855 / M31).